We begin with the raw amino-acid sequence, 885 residues long: Protein kintoun (885 aa).

Disordered stretches follow at residues 208 to 235 (LSKN…ADAG), 371 to 390 (LSRE…PVED), 607 to 636 (ELQQ…ESAC), 644 to 663 (EHHE…QRSY), 781 to 806 (RRLS…QPAH), and 819 to 871 (NNNH…MMFE). Basic and acidic residues predominate over residues 213–232 (TAEEKEPHPLEHMYPKKPEA). The residue at position 376 (S376) is a Phosphoserine. The span at 612-629 (HHQKKLNKKQRKRNKKQR) shows a compositional bias: basic residues. S784 is subject to Phosphoserine. Residues 824–837 (HVKDNKKQSLHDSG) are compositionally biased toward basic and acidic residues. The segment covering 842-855 (NGSINNKNNHSNEN) has biased composition (low complexity).

The protein belongs to the PIH1 family. Kintoun subfamily. In terms of assembly, interacts with Pp1alpha-96A, Pp1-87B, Pp1-13C and flw.

It is found in the cytoplasm. In terms of biological role, required for cytoplasmic pre-assembly of axonemal dyneins, thereby playing a central role in motility in cilia and flagella. Involved in pre-assembly of dynein arm complexes in the cytoplasm before intraflagellar transport loads them for the ciliary compartment. In Drosophila mojavensis (Fruit fly), this protein is Protein kintoun.